Here is a 306-residue protein sequence, read N- to C-terminus: Small ribosomal subunit protein uS2 (306 aa).

N-acetylserine is present on Ser-2. 2 laminin-binding regions span residues 161–180 (IPCN…MLAR) and 205–229 (RDPE…EYQG). [DE]-W-[ST] repeat units lie at residues 230-232 (EWT), 245-247 (DWS), 276-278 (DWS), 286-288 (DWS), and 304-306 (EWS). A laminin-binding region spans residues 242–306 (EVADWSEGVQ…EWTGTTTEWS (65 aa)). The disordered stretch occupies residues 261–306 (PAERPEIPAAKPAAEDWSSQPASTDDWSAAPTAQASEWTGTTTEWS). Over residues 277–306 (WSSQPASTDDWSAAPTAQASEWTGTTTEWS) the composition is skewed to polar residues.

This sequence belongs to the universal ribosomal protein uS2 family. In terms of assembly, monomer (37LRP) and homodimer (67LR). Component of the small ribosomal subunit. Mature ribosomes consist of a small (40S) and a large (60S) subunit. The 40S subunit contains about 33 different proteins and 1 molecule of RNA (18S). The 60S subunit contains about 49 different proteins and 3 molecules of RNA (28S, 5.8S and 5S). Interacts with rps21. Interacts with several laminins including at least lamb1. Interacts with mdk. Post-translationally, acylated. Acylation may be a prerequisite for conversion of the monomeric 37 kDa laminin receptor precursor (37LRP) to the mature dimeric 67 kDa laminin receptor (67LR), and may provide a mechanism for membrane association. Cleaved by stromelysin-3 (ST3) at the cell surface. Cleavage by stromelysin-3 may be a mechanism to alter cell-extracellular matrix interactions.

It is found in the cell membrane. The protein resides in the cytoplasm. Its subcellular location is the nucleus. In terms of biological role, required for the assembly and/or stability of the 40S ribosomal subunit. Required for the processing of the 20S rRNA-precursor to mature 18S rRNA in a late step of the maturation of 40S ribosomal subunits. Also functions as a cell surface receptor for laminin. Plays a role in cell adhesion to the basement membrane and in the consequent activation of signaling transduction pathways. May play a role in cell fate determination and tissue morphogenesis. This chain is Small ribosomal subunit protein uS2 (rpsa), found in Xenopus tropicalis (Western clawed frog).